The primary structure comprises 235 residues: Ribonuclease 3 (235 aa).

An RNase III domain is found at 11–137 (RAWCAEALGY…VVGALYLDGG (127 aa)). E51 contributes to the Mg(2+) binding site. Residue D55 is part of the active site. The Mg(2+) site is built by D123 and E126. E126 is an active-site residue. Positions 164-233 (DYKTQLQEQL…ARQALMPEHH (70 aa)) constitute a DRBM domain.

It belongs to the ribonuclease III family. As to quaternary structure, homodimer. It depends on Mg(2+) as a cofactor.

The protein localises to the cytoplasm. The catalysed reaction is Endonucleolytic cleavage to 5'-phosphomonoester.. Digests double-stranded RNA. Involved in the processing of primary rRNA transcript to yield the immediate precursors to the large and small rRNAs (23S and 16S). Processes some mRNAs, and tRNAs when they are encoded in the rRNA operon. Processes pre-crRNA and tracrRNA of type II CRISPR loci if present in the organism. This Symbiobacterium thermophilum (strain DSM 24528 / JCM 14929 / IAM 14863 / T) protein is Ribonuclease 3.